We begin with the raw amino-acid sequence, 510 residues long: Nucleosome assembly protein 1-like 3 (510 aa).

Disordered stretches follow at residues 1-99 and 161-311; these read MAEA…LGTN and PTEE…KRED. Residues 35-74 are compositionally biased toward low complexity; that stretch reads SSSSSSSTSGSSSSSSTSGSSSSSGSGSSSSSSGSGSTSS. The segment covering 161 to 182 has biased composition (acidic residues); it reads PTEEECEWNSEDEEFSSDEEVQ. Basic and acidic residues-rich tracts occupy residues 200–229, 235–246, and 254–300; these read PKENPEVKAEEKEVPKEIPEVKDEEKEVPK, KAEEKADSKDCM, and EDPK…VDLK.

It belongs to the nucleosome assembly protein (NAP) family.

The protein localises to the nucleus. In Pongo abelii (Sumatran orangutan), this protein is Nucleosome assembly protein 1-like 3 (NAP1L3).